Reading from the N-terminus, the 80-residue chain is uncharacterized protein (80 aa).

This is an uncharacterized protein from Enterobacteria phage T4 (Bacteriophage T4).